Here is a 421-residue protein sequence, read N- to C-terminus: D-amino acid dehydrogenase (421 aa).

Val-3 to Tyr-17 contributes to the FAD binding site.

Belongs to the DadA oxidoreductase family. It depends on FAD as a cofactor.

It carries out the reaction a D-alpha-amino acid + A + H2O = a 2-oxocarboxylate + AH2 + NH4(+). Its pathway is amino-acid degradation; D-alanine degradation; NH(3) and pyruvate from D-alanine: step 1/1. Functionally, oxidative deamination of D-amino acids. The chain is D-amino acid dehydrogenase from Acinetobacter baumannii (strain AB307-0294).